The sequence spans 784 residues: DNA ligase (784 aa).

NAD(+) contacts are provided by residues 31–35, 80–81, and Glu-120; these read DAEYD and SL. Lys-122 (N6-AMP-lysine intermediate) is an active-site residue. 4 residues coordinate NAD(+): Arg-143, Glu-180, Lys-296, and Lys-320. Zn(2+) is bound by residues Cys-414, Cys-417, Cys-444, and Cys-450. The BRCT domain maps to 701-784; it reads AEGLPLAGQT…AFMAEQGITL (84 aa).

Belongs to the NAD-dependent DNA ligase family. LigA subfamily. The cofactor is Mg(2+). Mn(2+) is required as a cofactor.

The catalysed reaction is NAD(+) + (deoxyribonucleotide)n-3'-hydroxyl + 5'-phospho-(deoxyribonucleotide)m = (deoxyribonucleotide)n+m + AMP + beta-nicotinamide D-nucleotide.. Its function is as follows. DNA ligase that catalyzes the formation of phosphodiester linkages between 5'-phosphoryl and 3'-hydroxyl groups in double-stranded DNA using NAD as a coenzyme and as the energy source for the reaction. It is essential for DNA replication and repair of damaged DNA. This Pseudomonas entomophila (strain L48) protein is DNA ligase.